A 77-amino-acid chain; its full sequence is uncharacterized protein (77 aa).

Residues 57-76 form a helical membrane-spanning segment; sequence NSAVICTLIANLMAFFMLLT.

The protein localises to the membrane. This is an uncharacterized protein from Schizosaccharomyces pombe (strain 972 / ATCC 24843) (Fission yeast).